A 1436-amino-acid polypeptide reads, in one-letter code: Inositol hexakisphosphate and diphosphoinositol-pentakisphosphate kinase 1 (1436 aa).

64 to 65 is a substrate binding site; that stretch reads KK. ATP contacts are provided by residues arginine 145, lysine 198, histidine 205, arginine 224, 248–251, and 257–259; these read EEFM and DVK. Residue 224–225 participates in substrate binding; it reads RK. 2 residues coordinate substrate: lysine 259 and arginine 273. ATP-binding positions include serine 275, aspartate 320, and 332–334; that span reads DVN. 337–340 contacts substrate; the sequence is SFVK. The polyphosphoinositide-binding domain stretch occupies residues 382-453; that stretch reads PTTSGTMMEL…VLDITRLLLA (72 aa). The interval 915–998 is disordered; the sequence is GSAPAGCGFR…TSSSRPGGYR (84 aa). A phosphoserine mark is found at serine 939, serine 982, serine 1032, serine 1068, serine 1140, and serine 1147. Disordered regions lie at residues 1131-1191 and 1389-1436; these read NHQA…GFSD and SELS…EAIS. The segment covering 1163–1181 has biased composition (low complexity); the sequence is SSGPSSTVSSAGPSSPTTV. Residues 1405-1436 are compositionally biased toward acidic residues; sequence LSEETELQAQEVSEEIDQESEVVDELPPEAIS.

The protein belongs to the histidine acid phosphatase family. VIP1 subfamily.

It localises to the cytoplasm. It is found in the cytosol. The protein localises to the cell membrane. It carries out the reaction 1D-myo-inositol hexakisphosphate + ATP = 1-diphospho-1D-myo-inositol 2,3,4,5,6-pentakisphosphate + ADP. The catalysed reaction is 5-diphospho-1D-myo-inositol 1,2,3,4,6-pentakisphosphate + ATP + H(+) = 1,5-bis(diphospho)-1D-myo-inositol 2,3,4,6-tetrakisphosphate + ADP. In terms of biological role, bifunctional inositol kinase that acts in concert with the IP6K kinases IP6K1, IP6K2 and IP6K3 to synthesize the diphosphate group-containing inositol pyrophosphates diphosphoinositol pentakisphosphate, PP-InsP5, and bis-diphosphoinositol tetrakisphosphate, (PP)2-InsP4. PP-InsP5 and (PP)2-InsP4, also respectively called InsP7 and InsP8, regulate a variety of cellular processes, including apoptosis, vesicle trafficking, cytoskeletal dynamics, exocytosis, insulin signaling and neutrophil activation. Phosphorylates inositol hexakisphosphate (InsP6) at position 1 to produce PP-InsP5 which is in turn phosphorylated by IP6Ks to produce (PP)2-InsP4. Alternatively, phosphorylates PP-InsP5 at position 1, produced by IP6Ks from InsP6, to produce (PP)2-InsP4. Activated when cells are exposed to hyperosmotic stress. This Mus musculus (Mouse) protein is Inositol hexakisphosphate and diphosphoinositol-pentakisphosphate kinase 1.